The following is a 289-amino-acid chain: Probable endonuclease 4 (289 aa).

Zn(2+) is bound by residues histidine 75, histidine 115, glutamate 153, aspartate 187, histidine 190, histidine 224, aspartate 237, histidine 239, and glutamate 269.

The protein belongs to the AP endonuclease 2 family. The cofactor is Zn(2+).

It carries out the reaction Endonucleolytic cleavage to 5'-phosphooligonucleotide end-products.. In terms of biological role, endonuclease IV plays a role in DNA repair. It cleaves phosphodiester bonds at apurinic or apyrimidinic (AP) sites, generating a 3'-hydroxyl group and a 5'-terminal sugar phosphate. In Chlamydia caviae (strain ATCC VR-813 / DSM 19441 / 03DC25 / GPIC) (Chlamydophila caviae), this protein is Probable endonuclease 4.